We begin with the raw amino-acid sequence, 167 residues long: NAD(P)H-quinone oxidoreductase subunit I, chloroplastic (167 aa).

4Fe-4S ferredoxin-type domains lie at 55 to 84 (GRIHFEFDKCIACEVCVRVCPIDLPVVDWK) and 95 to 124 (LNYSIDFGICIFCGNCVEYCPTNCLSMTEE). Residues Cys-64, Cys-67, Cys-70, Cys-74, Cys-104, Cys-107, Cys-110, and Cys-114 each contribute to the [4Fe-4S] cluster site.

The protein belongs to the complex I 23 kDa subunit family. As to quaternary structure, NDH is composed of at least 16 different subunits, 5 of which are encoded in the nucleus. It depends on [4Fe-4S] cluster as a cofactor.

Its subcellular location is the plastid. The protein resides in the chloroplast thylakoid membrane. It catalyses the reaction a plastoquinone + NADH + (n+1) H(+)(in) = a plastoquinol + NAD(+) + n H(+)(out). The enzyme catalyses a plastoquinone + NADPH + (n+1) H(+)(in) = a plastoquinol + NADP(+) + n H(+)(out). NDH shuttles electrons from NAD(P)H:plastoquinone, via FMN and iron-sulfur (Fe-S) centers, to quinones in the photosynthetic chain and possibly in a chloroplast respiratory chain. The immediate electron acceptor for the enzyme in this species is believed to be plastoquinone. Couples the redox reaction to proton translocation, and thus conserves the redox energy in a proton gradient. This is NAD(P)H-quinone oxidoreductase subunit I, chloroplastic from Jasminum nudiflorum (Winter jasmine).